A 325-amino-acid chain; its full sequence is Glutarate 2-hydroxylase (325 aa).

The Fe cation site is built by His160, Asp162, and His292.

It belongs to the glutarate hydroxylase family. As to quaternary structure, homotetramer. The cofactor is Fe(2+).

It catalyses the reaction glutarate + 2-oxoglutarate + O2 = (S)-2-hydroxyglutarate + succinate + CO2. It participates in amino-acid degradation. Functionally, acts as an alpha-ketoglutarate-dependent dioxygenase catalyzing hydroxylation of glutarate (GA) to L-2-hydroxyglutarate (L2HG). Functions in a L-lysine degradation pathway that proceeds via cadaverine, glutarate and L-2-hydroxyglutarate. In Salmonella newport (strain SL254), this protein is Glutarate 2-hydroxylase.